We begin with the raw amino-acid sequence, 122 residues long: Small ribosomal subunit protein bS6 (122 aa).

Positions 99-122 are disordered; that stretch reads PSPMMKEVAREEAKKAAAQTEQAA.

It belongs to the bacterial ribosomal protein bS6 family.

In terms of biological role, binds together with bS18 to 16S ribosomal RNA. The sequence is that of Small ribosomal subunit protein bS6 from Ralstonia pickettii (strain 12J).